The sequence spans 328 residues: Olfactory receptor 4A16 (328 aa).

Over 1–23 the chain is Extracellular; that stretch reads MRPSSNVTEFVLLGLTQDPDVKK. A glycan (N-linked (GlcNAc...) asparagine) is linked at asparagine 6. The chain crosses the membrane as a helical span at residues 24–47; the sequence is TLFVMFLLIYIVTMVGNLLIWVTT. The Cytoplasmic portion of the chain corresponds to 48-55; sequence IGSPSLGS. Residues 56–77 form a helical membrane-spanning segment; that stretch reads LMYFFLAYLSLMDAIYSTAMSP. At 78–98 the chain is on the extracellular side; it reads KLMIDLLCDKIAISLSACMGQ. Cysteine 95 and cysteine 187 are disulfide-bonded. A helical membrane pass occupies residues 99-118; the sequence is LFIEHLLGGAEVFLLVVMAY. Topologically, residues 119 to 137 are cytoplasmic; sequence DRYVAISKPLHYLNIMNRL. The helical transmembrane segment at 138–156 threads the bilayer; that stretch reads VCILLLVVAMIGGFVHSVV. Topologically, residues 157–193 are extracellular; it reads QIVFLYSLPICGPNVIDHSVCDMYPLLELLCLDTYFI. Residues 194–217 form a helical membrane-spanning segment; sequence GLTVVANGGIICMVIFTFLLISCG. Over 218 to 233 the chain is Cytoplasmic; it reads VILNFLKTYSQEERHK. The chain crosses the membrane as a helical span at residues 234 to 256; the sequence is ALPTCISHIIVVALVFVPCIFMY. Residues 257–267 are Extracellular-facing; it reads VRPVSNFPFDK. Residues 268–287 traverse the membrane as a helical segment; sequence LMTVFYSIITLMLNPLIYSL. Residues 288–328 are Cytoplasmic-facing; it reads RQSEMKNAMKNLWCEKLSIVRKRVSPTLNIFIPSSKATNRR.

The protein belongs to the G-protein coupled receptor 1 family.

Its subcellular location is the cell membrane. In terms of biological role, odorant receptor. This chain is Olfactory receptor 4A16 (OR4A16), found in Homo sapiens (Human).